The primary structure comprises 201 residues: uncharacterized protein (201 aa).

This is an uncharacterized protein from Caenorhabditis elegans.